We begin with the raw amino-acid sequence, 136 residues long: S-protein homolog 25 (136 aa).

The first 20 residues, 1 to 20, serve as a signal peptide directing secretion; that stretch reads MNHSVFVILITITYFGLNQA. Residues Asn-71 and Asn-84 are each glycosylated (N-linked (GlcNAc...) asparagine).

This sequence belongs to the plant self-incompatibility (S1) protein family.

The protein localises to the secreted. This chain is S-protein homolog 25, found in Arabidopsis thaliana (Mouse-ear cress).